A 333-amino-acid chain; its full sequence is tRNA uridine(34) hydroxylase (333 aa).

A Rhodanese domain is found at 123–217 (SDPEVVLVDT…YLEEVNKAES (95 aa)). The Cysteine persulfide intermediate role is filled by C177. Basic and acidic residues predominate over residues 313–327 (QKKEALRKQSAEKNK). The tract at residues 313 to 333 (QKKEALRKQSAEKNKAKQANA) is disordered.

Belongs to the TrhO family.

The enzyme catalyses uridine(34) in tRNA + AH2 + O2 = 5-hydroxyuridine(34) in tRNA + A + H2O. Its function is as follows. Catalyzes oxygen-dependent 5-hydroxyuridine (ho5U) modification at position 34 in tRNAs. In Shewanella oneidensis (strain ATCC 700550 / JCM 31522 / CIP 106686 / LMG 19005 / NCIMB 14063 / MR-1), this protein is tRNA uridine(34) hydroxylase.